The primary structure comprises 338 residues: SPbeta prophage-derived uncharacterized protein YonB (338 aa).

The chain is SPbeta prophage-derived uncharacterized protein YonB (yonB) from Bacillus subtilis (strain 168).